The primary structure comprises 324 residues: MAAVVSAAGGACPAVLQVAGLYRGLCAVRSRALGLGFVSPAQLRVFPVRRGSGLPPEGADGSGVSELEANPFYDRYRDKIQQLRRSDPAAFESRLEKRSEFRKQPVGHSKQSDFIKCMEQKTDALGKQPVSKGFTKDKTLSSVFNVEMVKDKTAEEIKQIWQQYFSAKDTVYAVIPKEKFDLIWNRAQSCPTFLCALPRRDGYEFFVGQWTGTELHFTALINIQTRGDAAASQLILYHYPELKEEKGIVLMTAEMDSTFLNVVEAQCIANQVQLFYATDRKEIYGLVETFNFRPNEFKYMSVIAELEQSGLGAELKRAQNQDKT.

Residues 1–54 (MAAVVSAAGGACPAVLQVAGLYRGLCAVRSRALGLGFVSPAQLRVFPVRRGSGL) constitute a mitochondrion transit peptide.

Belongs to the ATP11 family. In terms of assembly, interacts with ATP5F1B; involved in the assembly of the F1 component of the mitochondrial ATP synthase (ATPase). Widely expressed but with low level.

Its subcellular location is the mitochondrion inner membrane. Functionally, has a complex stabilizing activity in the assembly of the mitochondrial F1-F0 complex. The polypeptide is ATP synthase mitochondrial F1 complex assembly factor 1 (Mus musculus (Mouse)).